A 110-amino-acid chain; its full sequence is UPF0473 protein SSP1146 (110 aa).

It belongs to the UPF0473 family.

The chain is UPF0473 protein SSP1146 from Staphylococcus saprophyticus subsp. saprophyticus (strain ATCC 15305 / DSM 20229 / NCIMB 8711 / NCTC 7292 / S-41).